Here is a 500-residue protein sequence, read N- to C-terminus: Phenylalanine--tRNA ligase alpha subunit (500 aa).

Residues T343, 382 to 384 (QID), and F423 each bind L-phenylalanine. E425 is a Mg(2+) binding site. Residue F448 participates in L-phenylalanine binding.

Belongs to the class-II aminoacyl-tRNA synthetase family. Phe-tRNA synthetase alpha subunit type 2 subfamily. Tetramer of two alpha and two beta subunits. Mg(2+) is required as a cofactor.

The protein localises to the cytoplasm. It catalyses the reaction tRNA(Phe) + L-phenylalanine + ATP = L-phenylalanyl-tRNA(Phe) + AMP + diphosphate + H(+). This is Phenylalanine--tRNA ligase alpha subunit from Pyrococcus abyssi (strain GE5 / Orsay).